We begin with the raw amino-acid sequence, 146 residues long: MFRGNHPTRVDEKGRLKLPADFKRRIDEQYGSQFFITSKDGKVAEIYPLQEWEKVEQKLAQIPNMNPAKKKFLDRVNYYGQMVEMDAQGRVLLPQILRESAQVTGDVVVFGMQSYLEVANHEAFKQNMELNPMTAEDEQALAEFGL.

SpoVT-AbrB domains follow at residues 5–51 and 80–123; these read NHPT…PLQE and GQMV…NHEA.

Belongs to the MraZ family. As to quaternary structure, forms oligomers.

It is found in the cytoplasm. The protein localises to the nucleoid. In Acidobacterium capsulatum (strain ATCC 51196 / DSM 11244 / BCRC 80197 / JCM 7670 / NBRC 15755 / NCIMB 13165 / 161), this protein is Transcriptional regulator MraZ.